We begin with the raw amino-acid sequence, 2265 residues long: Collagen alpha-6(VI) chain (2265 aa).

An N-terminal signal peptide occupies residues 1 to 18 (MLLVLCLTMICFHVCVNQ). The segment at 19-1390 (DSGPEYADVV…TCCCLLCKCT (1372 aa)) is nonhelical region. VWFA domains follow at residues 26–205 (DVVF…IKDV), 228–406 (DVVF…LKKL), 435–605 (DIYL…RNQV), 621–790 (DIMF…EDDL), 808–981 (DVVF…FSDV), 999–1170 (DLVF…KKRI), and 1186–1378 (DVVV…INVA). N-linked (GlcNAc...) asparagine glycosylation is found at Asn-197, Asn-238, and Asn-346. Asn-760 carries N-linked (GlcNAc...) asparagine glycosylation. The interval 1391 to 1724 (GGDGAMGDPG…GRKGVKGARG (334 aa)) is triple-helical region. The segment at 1398-1722 (DPGSAGKKGP…PPGRKGVKGA (325 aa)) is disordered. Over residues 1455 to 1470 (EEGEVGEDGLDGLDGE) the composition is skewed to acidic residues. A compositionally biased stretch (basic and acidic residues) spans 1497–1507 (AAGDRGAKGLR). Positions 1507–1509 (RGD) match the Cell attachment site motif. The span at 1546–1558 (SRRKMVVHGRRGH) shows a compositional bias: basic residues. Residues 1725-2265 (LASFSTCDLI…ATSKLGKRSA (541 aa)) are nonhelical region. VWFA domains are found at residues 1756-1936 (ELVF…ERLQ) and 1964-2165 (DTAF…INSI). Residues 2186 to 2205 (SRDLKPPPRQFRSFVPGPQK) form a disordered region.

Belongs to the type VI collagen family. In terms of assembly, trimers composed of three different chains: alpha-1(VI), alpha-2(VI), and alpha-3(VI) or alpha-4(VI) or alpha-5(VI) or alpha-6(VI). In terms of processing, prolines at the third position of the tripeptide repeating unit (G-X-Y) are hydroxylated in some or all of the chains. In newborn, it is expressed in lung, heart, kidney, muscle, brain, intestine, skin, femur and sternum. In adult, it is expressed in lung, heart, muscle, ovary, brain, liver and sternum.

Its subcellular location is the secreted. The protein resides in the extracellular space. The protein localises to the extracellular matrix. Functionally, collagen VI acts as a cell-binding protein. This is Collagen alpha-6(VI) chain (Col6a6) from Mus musculus (Mouse).